Here is a 307-residue protein sequence, read N- to C-terminus: F-box protein At5g03100 (307 aa).

Residues 8-54 form the F-box domain; sequence VDFISSLPDEILHHILANTPTKLAIRTSVLSKRWKHVWYETPSISIV.

The polypeptide is F-box protein At5g03100 (Arabidopsis thaliana (Mouse-ear cress)).